A 406-amino-acid chain; its full sequence is Argininosuccinate synthase (406 aa).

ATP is bound by residues 11-19 (AYSGGLDTS) and Ala38. L-citrulline is bound by residues Tyr91 and Ser96. Position 121 (Gly121) interacts with ATP. Thr123, Asn127, and Asp128 together coordinate L-aspartate. Asn127 provides a ligand contact to L-citrulline. 5 residues coordinate L-citrulline: Arg131, Ser181, Ser190, Glu266, and Tyr278.

The protein belongs to the argininosuccinate synthase family. Type 1 subfamily. In terms of assembly, homotetramer.

The protein localises to the cytoplasm. The catalysed reaction is L-citrulline + L-aspartate + ATP = 2-(N(omega)-L-arginino)succinate + AMP + diphosphate + H(+). It participates in amino-acid biosynthesis; L-arginine biosynthesis; L-arginine from L-ornithine and carbamoyl phosphate: step 2/3. In Campylobacter jejuni subsp. jejuni serotype O:2 (strain ATCC 700819 / NCTC 11168), this protein is Argininosuccinate synthase.